The following is a 186-amino-acid chain: Ribosome-recycling factor (186 aa).

It belongs to the RRF family.

The protein resides in the cytoplasm. Functionally, responsible for the release of ribosomes from messenger RNA at the termination of protein biosynthesis. May increase the efficiency of translation by recycling ribosomes from one round of translation to another. In Rickettsia canadensis (strain McKiel), this protein is Ribosome-recycling factor.